The chain runs to 445 residues: Cytochrome P450 monooxygenase penB (445 aa).

Heme is bound at residue cysteine 381.

This sequence belongs to the cytochrome P450 family. Heme is required as a cofactor.

It functions in the pathway secondary metabolite biosynthesis. Its pathway is alkaloid biosynthesis. It participates in mycotoxin biosynthesis. Functionally, cytochrome P450 monooxygenase; part of the gene cluster that mediates the biosynthesis of penigequinolones, potent insecticidal alkaloids that contain a highly modified 10-carbon prenyl group. The first stage is catalyzed by the nonribosomal peptide synthetase penN that condenses anthranilic acid and O-methyl-L-tyrosine to produce 4'-methoxycyclopeptin. 4'-methoxycyclopeptin is then converted to 4'-methoxydehydrocyclopeptin by the ketoglutarate-dependent dioxygenase penM through dehydrogenation to form a double bond between C-alpha and C-beta of the O-methyltyrosine side chain. PenM also converts its first product methoxydehydrocyclopeptin to 4'-methoxycyclopenin. The following conversion of 4'methoxycyclopenin into 4'-methoxyviridicatin is catalyzed by the cyclopenase penL. 4'-methoxyviridicatin is the precursor of quinolone natural products, and is further converted to quinolinone B. The prenyltransferase penI then catalyzes the canonical Friedel-Crafts alkylation of quinolinone B with dimethylallyl cation to yield dimethylallyl quinolone, which is subjected to FAD-dependent dehydrogenation by the FAD-linked oxidoreductase penH to yield conjugated aryl diene. The delta(3') double bond then serves as the site of the second alkylation with DMAPP catalyzed by the prenyltransferase penG to yield a carbenium ion intermediate, which can be attacked by H(2)O to yield a styrenyl quinolone containing a C3'-hydroxyprenyl chain, or undergo cyclization to yield yaequinolones J1 and J2. The conversion of the styrenyl quinolone into the tetrahydrofuran-containing yaequinolone C is performed by the FAD-dependent monooxygenase penE and involves epoxidation of the terminal C7'-C8' olefin, followed by epoxide ring opening initiated by the C3' hydroxyl group. The predicted cysteine hydrolase penJ acts as an epoxide hydrolase that enhances the rate of the 5-exo-tet cyclization step, increasing the yield of yaequinolone C. PenF catalyzes the cationic rearrangement of the epoxide formed by penE (before ring opening to produce yaequinolone C) into yaequinolone D. Finally, the short-chain dehydrogenase/reductase (SDR)-like reductase penD, catalyzes both the dehydration of yaequinolone D and the reduction of the resulting oxonium to yield penigequinolone. This chain is Cytochrome P450 monooxygenase penB, found in Penicillium thymicola.